Consider the following 204-residue polypeptide: UPF0056 membrane protein TC_0241 (204 aa).

Helical transmembrane passes span 8–28 (LTLL…FVAL), 46–66 (IFAL…FRLL), 68–88 (VSLP…AINM), 107–127 (IFYP…STLG), 138–158 (LVLG…FFSS), and 176–196 (FGIS…STAF).

The protein belongs to the UPF0056 (MarC) family.

Its subcellular location is the cell membrane. The sequence is that of UPF0056 membrane protein TC_0241 from Chlamydia muridarum (strain MoPn / Nigg).